A 1079-amino-acid polypeptide reads, in one-letter code: BRD4-interacting chromatin-remodeling complex-associated protein-like (1079 aa).

Disordered regions lie at residues 51-79 and 509-604; these read NSSN…LPLS and LHLS…TPGT. Residues 68–79 are compositionally biased toward low complexity; sequence LGEGPSDGLPLS. Residues 544–576 are compositionally biased toward polar residues; the sequence is SSASTAHPSLGSAVQSGSSGSNFTGDQLTQPNR. The segment covering 590–604 has biased composition (low complexity); sequence SSSKSTSTFSNTPGT. Ser-623 carries the phosphoserine modification. Disordered stretches follow at residues 669–691, 837–877, and 917–954; these read EKVV…GGQK, TQFG…NHDQ, and TSEE…TESK. Basic and acidic residues-rich tracts occupy residues 918 to 928 and 938 to 952; these read SEEKASRREPL and EGHR…HGTE. Ser-980 bears the Phosphoserine mark.

As to quaternary structure, component of the multiprotein chromatin-remodeling complexes SWI/SNF: SWI/SNF-A (BAF), SWI/SNF-B (PBAF) and related complexes. The canonical complex contains a catalytic subunit (either SMARCA4/BRG1/BAF190A or SMARCA2/BRM/BAF190B) and at least SMARCE1, ACTL6A/BAF53, SMARCC1/BAF155, SMARCC2/BAF170, and SMARCB1/SNF5/BAF47. Other subunits specific to each of the complexes may also be present permitting several possible combinations developmentally and tissue specific. Component of the SWI/SNF (GBAF) subcomplex, which includes at least BICRA or BICRAL (mutually exclusive), BRD9, SS18, the core BAF subunits, SMARCA2/BRM, SMARCA4/BRG1/BAF190A, ACTL6A/BAF53, SMARCC1/BAF155, and SMARCD1/BAF60A.

Functionally, component of SWI/SNF chromatin remodeling subcomplex GBAF that carries out key enzymatic activities, changing chromatin structure by altering DNA-histone contacts within a nucleosome in an ATP-dependent manner. In Homo sapiens (Human), this protein is BRD4-interacting chromatin-remodeling complex-associated protein-like.